Here is a 232-residue protein sequence, read N- to C-terminus: Ribonuclease 3 (232 aa).

The region spanning 5 to 134 (QTVLKNHFEI…FLGALLLDKD (130 aa)) is the RNase III domain. Glu-47 provides a ligand contact to Mg(2+). The active site involves Asp-51. Mg(2+)-binding residues include Asp-120 and Glu-123. Residue Glu-123 is part of the active site. In terms of domain architecture, DRBM spans 160–229 (DYKTHLQELL…AKNAVEKGLD (70 aa)).

The protein belongs to the ribonuclease III family. Homodimer. The cofactor is Mg(2+).

The protein resides in the cytoplasm. It catalyses the reaction Endonucleolytic cleavage to 5'-phosphomonoester.. In terms of biological role, digests double-stranded RNA. Involved in the processing of primary rRNA transcript to yield the immediate precursors to the large and small rRNAs (23S and 16S). Processes some mRNAs, and tRNAs when they are encoded in the rRNA operon. Processes pre-crRNA and tracrRNA of type II CRISPR loci if present in the organism. The sequence is that of Ribonuclease 3 from Streptococcus pneumoniae (strain ATCC BAA-255 / R6).